The following is an 815-amino-acid chain: (-)-kolavenyl diphosphate synthase TPS14, chloroplastic (815 aa).

The transit peptide at 1 to 51 (MFMSSSSSSHARRPQLSSFSYLHPPLPFPGLSFFNTRDKRVNFDSTRIICI) directs the protein to the chloroplast. Lysine 247 contributes to the substrate binding site. Aspartate 379 and aspartate 381 together coordinate Mg(2+). The DXDD motif signature appears at 379–382 (DIDD). Lysine 465 contacts substrate.

The protein belongs to the terpene synthase family. Tpsc subfamily. It depends on Mg(2+) as a cofactor.

The protein resides in the plastid. The protein localises to the chloroplast. The catalysed reaction is (2E,6E,10E)-geranylgeranyl diphosphate = (-)-kolavenyl diphosphate. With respect to regulation, inhibited by high concentrations of magnesium. Diterpene synthase that catalyzes the formation of (-)-kolavenyl diphosphate from geranylgeranyl diphosphate (GGPP). This is (-)-kolavenyl diphosphate synthase TPS14, chloroplastic from Tripterygium wilfordii (Thunder God vine).